The primary structure comprises 251 residues: Core protein VP8 (251 aa).

The propeptide at 1–32 is removed by core protease OPG083; it reads MSLLLENLIEEDTIFFAGSISEYDDLQMVIAG.

This sequence belongs to the orthopoxvirus OPG098 family. Post-translationally, undergoes morphogenesis-associated proteolysis which cleaves the 28 kDa to a 25-kDa product. Proteolytic cleavage of major core proteins P4a (OPG136), P4b (OPG129), and VP8 (OPG098), which occurs at a late stage of core formation, is required for production of infectious mature virions (MV).

It is found in the virion. The protein localises to the host cytoplasm. Its function is as follows. Major core structural protein. The chain is Core protein VP8 (OPG098) from Monkeypox virus.